A 281-amino-acid chain; its full sequence is Predicted GPI-anchored protein 39 (281 aa).

Residues 1–18 (MKATTFTLLLSIATAINA) form the signal peptide. Disordered regions lie at residues 52 to 94 (HHHG…SASV) and 106 to 227 (VSVS…SSSE). Low complexity-rich tracts occupy residues 69–94 (SSSSVSESTVEELSTTTTTESVSASV), 106–158 (VSVS…STTD), 167–203 (ATDSVETTFESVSNTEDLSSSSSSIITDSSESTIEET), and 210–227 (SVPSSLSEEYSTSGSSSE). N-linked (GlcNAc...) asparagine glycosylation is present at asparagine 150. N-linked (GlcNAc...) asparagine glycans are attached at residues asparagine 239, asparagine 246, asparagine 249, and asparagine 252. Serine 256 carries GPI-anchor amidated serine lipidation. The propeptide at 257–281 (ANFAIQYGTDYGVAVVAAIVGALLI) is removed in mature form.

The protein localises to the cell membrane. The protein is Predicted GPI-anchored protein 39 (PGA39) of Candida albicans (strain SC5314 / ATCC MYA-2876) (Yeast).